We begin with the raw amino-acid sequence, 142 residues long: MITEFIKSFLLFFFLPFFLSMPMIFATLGEFTDDQTHHYSTLPSCDLLLIRGEVKENARCFLHNPKISHQHHSFWSLIEGCLEALQFGLLAILQGLFSQFAWEACSCTFACMLLTSERTEPSYPFSEITEVSRGGLHFVKLN.

The N-terminal stretch at 1–26 is a signal peptide; it reads MITEFIKSFLLFFFLPFFLSMPMIFA.

This is an uncharacterized protein from Schizosaccharomyces pombe (strain 972 / ATCC 24843) (Fission yeast).